A 239-amino-acid polypeptide reads, in one-letter code: Proteasome subunit beta (239 aa).

A compositionally biased stretch (polar residues) spans 1–16 (MRQPDSSLPRTGQDHT). The segment at 1 to 32 (MRQPDSSLPRTGQDHTLSPYEPELGEVPSNDL) is disordered. The propeptide at 1-44 (MRQPDSSLPRTGQDHTLSPYEPELGEVPSNDLSMADLDNVNKTG) is removed in mature form; by autocatalysis. Catalysis depends on T45, which acts as the Nucleophile.

This sequence belongs to the peptidase T1B family. As to quaternary structure, the 20S proteasome core is composed of 14 alpha and 14 beta subunits that assemble into four stacked heptameric rings, resulting in a barrel-shaped structure. The two inner rings, each composed of seven catalytic beta subunits, are sandwiched by two outer rings, each composed of seven alpha subunits. The catalytic chamber with the active sites is on the inside of the barrel. Has a gated structure, the ends of the cylinder being occluded by the N-termini of the alpha-subunits. Is capped at one or both ends by the proteasome regulatory ATPase, PAN.

The protein resides in the cytoplasm. The catalysed reaction is Cleavage of peptide bonds with very broad specificity.. Its activity is regulated as follows. The formation of the proteasomal ATPase PAN-20S proteasome complex, via the docking of the C-termini of PAN into the intersubunit pockets in the alpha-rings, triggers opening of the gate for substrate entry. Interconversion between the open-gate and close-gate conformations leads to a dynamic regulation of the 20S proteasome proteolysis activity. Its function is as follows. Component of the proteasome core, a large protease complex with broad specificity involved in protein degradation. The chain is Proteasome subunit beta from Natronomonas pharaonis (strain ATCC 35678 / DSM 2160 / CIP 103997 / JCM 8858 / NBRC 14720 / NCIMB 2260 / Gabara) (Halobacterium pharaonis).